A 219-amino-acid polypeptide reads, in one-letter code: Ras-related protein RABA5d (219 aa).

Residue serine 2 is modified to N-acetylserine. 19–26 contributes to the GTP binding site; that stretch reads GDSAVGKS. Positions 41 to 49 match the Effector region motif; it reads SKATIGVEF. Residues 67-71, 125-128, and 155-156 each bind GTP; these read DTAGQ, NKCD, and SA. 2 S-geranylgeranyl cysteine lipidation sites follow: cysteine 215 and cysteine 216.

This sequence belongs to the small GTPase superfamily. Rab family.

The protein localises to the cell membrane. Functionally, intracellular vesicle trafficking and protein transport. This Arabidopsis thaliana (Mouse-ear cress) protein is Ras-related protein RABA5d (RABA5D).